A 218-amino-acid polypeptide reads, in one-letter code: Sodium channel regulatory subunit beta-1 (218 aa).

The first 18 residues, 1 to 18 (MGRLLALVVGAALVSSAC), serve as a signal peptide directing secretion. The Extracellular segment spans residues 19–157 (GGCVEVDSET…DKANRDMASI (139 aa)). Disulfide bonds link cysteine 21–cysteine 43 and cysteine 40–cysteine 121. The region spanning 22 to 150 (VEVDSETEAV…KIHIEVVDKA (129 aa)) is the Ig-like C2-type domain. Residues asparagine 93, asparagine 110, asparagine 114, and asparagine 135 are each glycosylated (N-linked (GlcNAc...) asparagine). Residues 158 to 179 (VSEIMMYVLIVVLTIWLVAEMI) form a helical membrane-spanning segment. The Cytoplasmic portion of the chain corresponds to 180–218 (YCYKKIAAATETAAQENASEYLAITSESKENCTGVQVAE).

The protein belongs to the sodium channel auxiliary subunit SCN1B (TC 8.A.17) family. In terms of assembly, voltage-gated sodium (Nav) channel consists of an ion-conducting pore-forming alpha subunit functional on its own that is regulated by one or more beta subunits. Interacts with SCN1A; regulatory subunit of SCN1A/Nav1.1. Interacts with SCN3A; regulatory subunit of SCN3A/Nav1.3. Interacts with SCN4A; regulatory subunit of SCN4A/Nav1.4. Interacts with SCN5A; regulatory subunit of SCN5A/Nav1.5. Interacts with SCN8A; regulatory subunit of SCN8A/Nav1.6. Interacts with SCN9A; regulatory subunit of SCN9A/Nav1.7. Interacts with SCN10A; regulatory subunit of SCN10A/Nav1.8. Interacts with NFASC. Interacts with TMEM65. In terms of tissue distribution, the overall expression of isoform 1 and isoform 2 is very similar. Isoform 1 is abundantly expressed in skeletal muscle, heart and brain. Isoform 2 is highly expressed in brain and skeletal muscle and present at a very low level in heart, placenta, lung, liver, kidney and pancreas. In brain, isoform 2 is most abundant in the cerebellum, followed by the cerebral cortex and occipital lobe, while isoform 1 levels are higher in the cortex compared to the cerebellum. Isoform 2 is expressed in many regions of the brain, including cerebellar Purkinje cells, cortex pyramidal neurons and many of the neuronal fibers throughout the brain (at protein level). Also detected in dorsal root ganglion, in fibers of the spinal nerve and in cortical neurons and their processes (at protein level).

The protein resides in the cell membrane. Its subcellular location is the perikaryon. It is found in the cell projection. It localises to the axon. The protein localises to the secreted. In terms of biological role, regulatory subunit of multiple voltage-gated sodium (Nav) channels directly mediating the depolarization of excitable membranes. Navs, also called VGSCs (voltage-gated sodium channels) or VDSCs (voltage-dependent sodium channels), operate by switching between closed and open conformations depending on the voltage difference across the membrane. In the open conformation they allow Na(+) ions to selectively pass through the pore, along their electrochemical gradient. The influx of Na+ ions provokes membrane depolarization, initiating the propagation of electrical signals throughout cells and tissues. The accessory beta subunits participate in localization and functional modulation of the Nav channels. Modulates the activity of SCN1A/Nav1.1, SCN2A/Nav1.2, SCN3A/Nav1.3, SCN4A/Nav1.4, SCN5A/Nav1.5, SCN8A/Nav1.6, SCN9A/Nav1.7 and SCN10A/Nav1.8. Functionally, cell adhesion molecule that plays a critical role in neuronal migration and pathfinding during brain development. Stimulates neurite outgrowth. Has no regulatory function on the SCN2A sodium channel complex. The polypeptide is Sodium channel regulatory subunit beta-1 (Homo sapiens (Human)).